Consider the following 310-residue polypeptide: Malate dehydrogenase (310 aa).

NAD(+) contacts are provided by residues 7–12 (GAGNVG) and Asp-32. Residues Arg-81 and Arg-87 each coordinate substrate. Residues Asn-94 and 117–119 (VSN) contribute to the NAD(+) site. Substrate contacts are provided by Asn-119 and Arg-150. The active-site Proton acceptor is the His-174.

This sequence belongs to the LDH/MDH superfamily. MDH type 3 family.

The enzyme catalyses (S)-malate + NAD(+) = oxaloacetate + NADH + H(+). In terms of biological role, catalyzes the reversible oxidation of malate to oxaloacetate. This chain is Malate dehydrogenase, found in Chlorobium phaeobacteroides (strain DSM 266 / SMG 266 / 2430).